The chain runs to 475 residues: Chromosomal replication initiator protein DnaA (475 aa).

The tract at residues 1–73 (MSDTEQERWS…LSCWQAELPD (73 aa)) is domain I, interacts with DnaA modulators. The segment at 73 to 131 (DVHRIDLTVRSAMRCAAPVREAPATDARHPERSEGRNGVELKTVATAPASANHDALGGS) is domain II. Residues 132-354 (PLDPRLTFQS…GAINRLLAHS (223 aa)) form a domain III, AAA+ region region. 4 residues coordinate ATP: G179, G181, K182, and T183. Positions 355-475 (KLNAQPVTLE…VELLKRQLQE (121 aa)) are domain IV, binds dsDNA.

This sequence belongs to the DnaA family. In terms of assembly, oligomerizes as a right-handed, spiral filament on DNA at oriC.

The protein resides in the cytoplasm. Functionally, plays an essential role in the initiation and regulation of chromosomal replication. ATP-DnaA binds to the origin of replication (oriC) to initiate formation of the DNA replication initiation complex once per cell cycle. Binds the DnaA box (a 9 base pair repeat at the origin) and separates the double-stranded (ds)DNA. Forms a right-handed helical filament on oriC DNA; dsDNA binds to the exterior of the filament while single-stranded (ss)DNA is stabiized in the filament's interior. The ATP-DnaA-oriC complex binds and stabilizes one strand of the AT-rich DNA unwinding element (DUE), permitting loading of DNA polymerase. After initiation quickly degrades to an ADP-DnaA complex that is not apt for DNA replication. Binds acidic phospholipids. This chain is Chromosomal replication initiator protein DnaA, found in Nitrobacter winogradskyi (strain ATCC 25391 / DSM 10237 / CIP 104748 / NCIMB 11846 / Nb-255).